Consider the following 306-residue polypeptide: Large ribosomal subunit protein mL45 (306 aa).

Residues 287-306 (LKPEEEYEEAQGEAQKPQLA) form a disordered region.

This sequence belongs to the mitochondrion-specific ribosomal protein mL45 family. In terms of assembly, component of the mitochondrial large ribosomal subunit (mt-LSU). Mature mammalian 55S mitochondrial ribosomes consist of a small (28S) and a large (39S) subunit. The 28S small subunit contains a 12S ribosomal RNA (12S mt-rRNA) and 30 different proteins. The 39S large subunit contains a 16S rRNA (16S mt-rRNA), a copy of mitochondrial valine transfer RNA (mt-tRNA(Val)), which plays an integral structural role, and 52 different proteins.

It localises to the mitochondrion. In terms of biological role, component of the mitochondrial large ribosomal subunit (mt-LSU). Within the mitochondrial ribosomes, required to direct the nascent polypeptide toward the tunnel exit and position the exit at a distance from the membrane surface. In Homo sapiens (Human), this protein is Large ribosomal subunit protein mL45.